We begin with the raw amino-acid sequence, 258 residues long: UPF0246 protein YaaA (258 aa).

The protein belongs to the UPF0246 family.

The sequence is that of UPF0246 protein YaaA from Shigella flexneri serotype 5b (strain 8401).